The sequence spans 432 residues: Alpha-galactosidase (432 aa).

2 to 68 (KKITFIGAGS…PSVAINSYDD (67 aa)) is a binding site for NAD(+). Substrate is bound at residue Asn148. A Mn(2+)-binding site is contributed by Cys169. The active-site Proton donor is the His170. Position 199 (His199) interacts with Mn(2+).

The protein belongs to the glycosyl hydrolase 4 family. Homodimer. It depends on Mn(2+) as a cofactor. Requires NAD(+) as cofactor.

The protein resides in the cytoplasm. It catalyses the reaction Hydrolysis of terminal, non-reducing alpha-D-galactose residues in alpha-D-galactosides, including galactose oligosaccharides, galactomannans and galactolipids.. In terms of biological role, catalyzes the hydrolysis of melibiose and alpha-galactosides of the raffinose family of oligosaccharides (RFOs) such as raffinose and stachyose. Cannot act on polymeric substrates such as locust bean gum. This is Alpha-galactosidase from Bacillus subtilis (strain 168).